Consider the following 538-residue polypeptide: MQQFTIRTRLLMLVGAMFIGFITIELMGFSALQRGVASLNTVYLDRVVPLRDLKTIADLYAVKIVDSSHKARSGRMTYAQAEQEVKDAGRQIDMLWHAYQKTKKIDEEQRSVDALAKLVDEAQDPIERLKGILERGDKAALDTFVENEMYPLIDPLSEGLSHLTQIQVEESKRAYDAAVVLYDSSRTMLALLLLGILICGGVFATRLIRSIIHPLTTLKDAAARVALGDLSQSIQVSGRNEVTDVQQSVQAMQANLRNTLQDIQGSAAQLAAAAEELQTATESTAQGIHRQNDEMQMAATAVTEMSAAVDEVADNANRTSNASHEAMDLADGGRKQVMLTRETIDRLSGKLNETTRTVFRLAEEASNIGRVLDVIRAIAEQTKLLALNAAIEAAHAGEAGRGFAVVADEVRNLAQRTQTSTQEIERMISAIQSVTQEGVRDVQQSCEFAARSQTMSSEADQALTLIAERITEINGMNLVIASAAEEQAQVAREVDRNLVAISDISEQSTAGVQQTSEASEELARLAANLNNLVNRFSM.

The Cytoplasmic portion of the chain corresponds to 1 to 9; the sequence is MQQFTIRTR. Residues 10 to 30 traverse the membrane as a helical segment; sequence LLMLVGAMFIGFITIELMGFS. Topologically, residues 31–187 are periplasmic; that stretch reads ALQRGVASLN…AVVLYDSSRT (157 aa). Residues 188–208 traverse the membrane as a helical segment; it reads MLALLLLGILICGGVFATRLI. The region spanning 209-261 is the HAMP domain; the sequence is RSIIHPLTTLKDAAARVALGDLSQSIQVSGRNEVTDVQQSVQAMQANLRNTLQ. The Cytoplasmic portion of the chain corresponds to 209-538; it reads RSIIHPLTTL…LNNLVNRFSM (330 aa). The Methyl-accepting transducer domain occupies 266–502; sequence SAAQLAAAAE…EVDRNLVAIS (237 aa).

This sequence belongs to the methyl-accepting chemotaxis (MCP) protein family.

It is found in the cell inner membrane. Chemotactic-signal transducers respond to changes in the concentration of attractants and repellents in the environment, transduce a signal from the outside to the inside of the cell, and facilitate sensory adaptation through the variation of the level of methylation. Chemoreceptor for naphthalene or a related compound. May facilitate biodegradation. This is Methyl-accepting chemotaxis protein NahY (nahY) from Pseudomonas putida (Arthrobacter siderocapsulatus).